A 452-amino-acid polypeptide reads, in one-letter code: Protein bfr2 (452 aa).

Basic and acidic residues-rich tracts occupy residues 1–10 and 19–34; these read MGKVSLKDEL and QERD…SDRE. Residues 1–141 are disordered; the sequence is MGKVSLKDEL…SAIPEKDMDR (141 aa). Ser-31, Ser-36, and Ser-37 each carry phosphoserine. Residues 43-57 show a composition bias toward basic and acidic residues; the sequence is TLGREHYVDVSESKL. A compositionally biased stretch (low complexity) spans 78 to 92; sequence ELLNSGSLNSQSSSP. Over residues 93–106 the composition is skewed to acidic residues; it reads SEEEDSEEDENDAV.

This sequence belongs to the AATF family.

It localises to the nucleus. The protein resides in the nucleolus. This Schizosaccharomyces pombe (strain 972 / ATCC 24843) (Fission yeast) protein is Protein bfr2 (bfr2).